The chain runs to 751 residues: MAFRTICVLVGVFICSICVKGSSQPQARVYLTFDELRETKTSEYFSLSHHPLDYRILLMDEDQDRIYVGSKDHILSLNINNISQEPLSVFWPASTIKVEECKMAGKDPTHGCGNFVRVIQTFNRTHLYVCGSGAFSPVCTYLNRGRRSEDQVFMIDSKCESGKGRCSFNPNVNTVSVMINEELFSGMYIDFMGTDAAIFRSLTKRNAVRTDQHNSKWLSEPMFVDAHVIPDGTDPNDAKVYFFFKEKLTDNNRSTKQIHSMIARICPNDTGGLRSLVNKWTTFLKARLVCSVTDEDGPETHFDELEDVFLLETDNPRTTLVYGIFTTSSSVFKGSAVCVYHLSDIQTVFNGPFAHKEGPNHQLISYQGRIPYPRPGTCPGGAFTPNMRTTKEFPDDVVTFIRNHPLMYNSIYPVHKRPLIVRIGTDYKYTKIAVDRVNAADGRYHVLFLGTDRGTVQKVVVLPTNSSVSGELILEELEVFKNHAPITTMKISSKKQQLYVSSNEGVSQVSLHRCHIYGTACADCCLARDPYCAWDGHSCSRFYPTGKRRSRRQDVRHGNPLTQCRGFNLKAYRNAAEIVQYGVKNNTTFLECAPKSPQASIKWLLQKDKDRRKEVKLNERIIATSQGLLIRSVQGSDQGLYHCIATENSFKQTIAKINFKVLDSEMVAVVTDKWSPWTWASSVRALPFHPKDIMGAFSHSEMQMINQYCKDTRQQHQQGDESQKMRGDYGKLKALINSRKSRNRRNQLPES.

The N-terminal stretch at 1–21 (MAFRTICVLVGVFICSICVKG) is a signal peptide. The Sema domain occupies 28–511 (RVYLTFDELR…SNEGVSQVSL (484 aa)). An N-linked (GlcNAc...) asparagine glycan is attached at Asn-81. Cys-101 and Cys-112 are oxidised to a cystine. The N-linked (GlcNAc...) asparagine glycan is linked to Asn-123. Residues Cys-130 and Cys-139 are joined by a disulfide bond. N-linked (GlcNAc...) asparagine glycans are attached at residues Asn-252 and Asn-268. 2 disulfide bridges follow: Cys-266-Cys-378 and Cys-290-Cys-338. The N-linked (GlcNAc...) asparagine glycan is linked to Asn-465. A disulfide bond links Cys-514 and Cys-532. The Ig-like C2-type domain occupies 571–655 (AYRNAAEIVQ…TENSFKQTIA (85 aa)). 2 N-linked (GlcNAc...) asparagine glycosylation sites follow: Asn-585 and Asn-586. Cys-592 and Cys-643 form a disulfide bridge. A compositionally biased stretch (basic and acidic residues) spans 712–731 (TRQQHQQGDESQKMRGDYGK). The disordered stretch occupies residues 712-751 (TRQQHQQGDESQKMRGDYGKLKALINSRKSRNRRNQLPES).

Belongs to the semaphorin family. Interacts with PLXND1.

Its subcellular location is the secreted. Functionally, binds to plexin family members and plays an important role in the regulation of developmental processes. Required for normal cardiovascular development during embryogenesis. Functions as attractant for growing axons, and thereby plays an important role in axon growth and axon guidance. In Pongo abelii (Sumatran orangutan), this protein is Semaphorin-3C (SEMA3C).